The primary structure comprises 223 residues: Guanylate kinase (223 aa).

The tract at residues 1-22 (MTADGGPDVRHGTRPEPSGDGR) is disordered. Positions 7–19 (PDVRHGTRPEPSG) are enriched in basic and acidic residues. Residues 21-201 (GRVVVLSGPS…ACAELVSLLV (181 aa)) enclose the Guanylate kinase-like domain. An ATP-binding site is contributed by 28–35 (GPSAVGKS). A disordered region spans residues 204–223 (APDRHDTSGRTGRQTTSHPD). Polar residues predominate over residues 212 to 223 (GRTGRQTTSHPD).

The protein belongs to the guanylate kinase family.

Its subcellular location is the cytoplasm. It carries out the reaction GMP + ATP = GDP + ADP. Functionally, essential for recycling GMP and indirectly, cGMP. This is Guanylate kinase from Mycolicibacterium paratuberculosis (strain ATCC BAA-968 / K-10) (Mycobacterium paratuberculosis).